Here is a 222-residue protein sequence, read N- to C-terminus: uncharacterized protein (222 aa).

Residues Ser-43–Ile-73 are a coiled coil.

This is an uncharacterized protein from Rickettsia conorii (strain ATCC VR-613 / Malish 7).